A 632-amino-acid polypeptide reads, in one-letter code: Chaperone protein HtpG (632 aa).

An a; substrate-binding region spans residues 1–343 (MSEQTINNKE…SNDLALNVSR (343 aa)). The segment at 344 to 560 (EILQDNKVTQ…DFEMGTQMAK (217 aa)) is b. The tract at residues 561–632 (LLEAAGQAAP…LSAMNQLLSK (72 aa)) is c.

This sequence belongs to the heat shock protein 90 family. In terms of assembly, homodimer.

The protein localises to the cytoplasm. Molecular chaperone. Has ATPase activity. This Aliivibrio salmonicida (strain LFI1238) (Vibrio salmonicida (strain LFI1238)) protein is Chaperone protein HtpG.